An 863-amino-acid chain; its full sequence is Receptor-like protein 9DC1 (863 aa).

Residues 1–21 (MGCVKLVFFMLYVFLFQLVSS) form the signal peptide. Residues 22 to 812 (SSLPHLCPED…EEDSPMISWQ (791 aa)) lie on the Extracellular side of the membrane. The segment at 24 to 90 (LPHLCPEDQA…GVHCDETTGQ (67 aa)) is N-cap. N-linked (GlcNAc...) asparagine glycans are attached at residues N71 and N108. The LRR 1; degenerate repeat unit spans residues 91–114 (VIALDLRCSQLQGKFHSNSSLFQL). LRR repeat units follow at residues 115 to 138 (SNLKRLDLSNNNFIGSLISPKFGE) and 140 to 163 (SDLTHLDLSDSSFTGVIPSEISHL). Residues 164 to 190 (SKLHVLLIGDQYGLSIVPHNFEPLLKN) form an LRR 4; degenerate repeat. Residues N190, N203, and N211 are each glycosylated (N-linked (GlcNAc...) asparagine). 6 LRR repeats span residues 191-213 (LTQLRELNLYEVNLSSTVPSNFS), 214-237 (SHLTTLQLSGTGLRGLLPERVFHL), 240-262 (LEFLDLSYNSQLMVRFPTTKWNS), 264-286 (ASLMKLYVHSVNIADRIPESFSH), 287-311 (LTSLHELDMGYTNLSGPIPKPLWNL), and 312-336 (TNIESLDLRYNHLEGPIPQLPIFEK). The N-linked (GlcNAc...) asparagine glycan is linked to N261. Residues N299 and N310 are each glycosylated (N-linked (GlcNAc...) asparagine). The LRR 11; degenerate repeat unit spans residues 337–357 (LKKLSLFRNDNLDGGLEFLSF). LRR repeat units lie at residues 358–382 (NTQLERLDLSSNSLTGPIPSNISGL), 383–406 (QNLECLYLSSNHLNGSIPSWIFSL), 408–428 (SLVELDLSNNTFSGKIQEFKS), 429–452 (KTLSAVTLKQNKLKGRIPNSLLNQ), 454–476 (NLQLLLLSHNNISGHISSAICNL), 477–500 (KTLILLDLGSNNLEGTIPQCVVER), 502–524 (EYLSHLDLSKNRLSGTINTTFSV), 525–549 (GNILRVISLHGNKLTGKVPRSMINC), 551–572 (YLTLLDLGNNMLNDTFPNWLGY), 573–597 (LFQLKILSLRSNKLHGPIKSSGNTN), 599–623 (FMGLQILDLSSNGFSGNLPERILGN), 667–690 (LDSNMIINLSKNRFEGHIPSIIGD), 691–714 (LVGLRTLNLSHNVLEGHIPASFQN), 715–739 (LSVLESLDLSSNKISGEIPQQLASL), and 741–759 (FLEVLNLSHNHLVGCIPKG). N-linked (GlcNAc...) asparagine glycosylation is found at N378, N396, and N416. N464 is a glycosylation site (N-linked (GlcNAc...) asparagine). Residue N519 is glycosylated (N-linked (GlcNAc...) asparagine). N563 is a glycosylation site (N-linked (GlcNAc...) asparagine). N-linked (GlcNAc...) asparagine glycosylation is found at N674, N698, and N714. N-linked (GlcNAc...) asparagine glycans are attached at residues N746 and N767. The C-cap/acidic domain stretch occupies residues 760 to 812 (KQFDSFGNTSYQGNDGLRGFPLSKLCGGEDQVTTPAELDQEEEEEDSPMISWQ). A helical membrane pass occupies residues 813–833 (GVLVGYGCGLVIGLSVIYIMW). Residues 834 to 863 (STQYPAWFSRMDLKLEHIITTKMKKHKKRY) lie on the Cytoplasmic side of the membrane.

The protein belongs to the RLP family.

It localises to the cell membrane. Its function is as follows. Involved in plant defense. Confers resistance to the fungal pathogen C.fulvum through recognition of the AVR9 elicitor protein. The sequence is that of Receptor-like protein 9DC1 from Solanum pimpinellifolium (Currant tomato).